Reading from the N-terminus, the 136-residue chain is MLQPKRTKFRKMHKGRNRGLAAGADVSFGSFGLKAVGRGRLTARQIEAARRAMTRAVKRQGKIWIRVFPDKPITEKPLAVRMGKGKGNVEYWVALIQPGKVLYEMDGVPEELAREAFKLAAAKLPIKTTFVTKTVM.

Belongs to the universal ribosomal protein uL16 family. As to quaternary structure, part of the 50S ribosomal subunit.

In terms of biological role, binds 23S rRNA and is also seen to make contacts with the A and possibly P site tRNAs. This is Large ribosomal subunit protein uL16 from Salmonella agona (strain SL483).